A 340-amino-acid chain; its full sequence is Putative cystathionine beta-lyase (340 aa).

Lysine 208 carries the N6-(pyridoxal phosphate)lysine modification.

It belongs to the trans-sulfuration enzymes family. Pyridoxal 5'-phosphate is required as a cofactor.

The catalysed reaction is L,L-cystathionine + H2O = L-homocysteine + pyruvate + NH4(+). It carries out the reaction an S-substituted L-cysteine + H2O = a thiol + pyruvate + NH4(+). It functions in the pathway amino-acid biosynthesis; L-methionine biosynthesis via de novo pathway; L-homocysteine from L-cystathionine: step 1/1. The protein is Putative cystathionine beta-lyase (IRC7) of Saccharomyces cerevisiae (strain ATCC 204508 / S288c) (Baker's yeast).